The primary structure comprises 128 residues: Fumarate reductase subunit C (128 aa).

3 helical membrane-spanning segments follow: residues 31-51, 67-87, and 106-126; these read ATCIATIWFCLVLLYGVISLG, VVILNIISLAGLLYHAATLYV, and ILKNALWAITGLVSLLALVLV.

The protein belongs to the FrdC family. Part of an enzyme complex containing four subunits: a flavoprotein (FrdA), an iron-sulfur protein (FrdB), and two hydrophobic anchor proteins (FrdC and FrdD).

The protein localises to the cell inner membrane. Functionally, anchors the catalytic components of the fumarate reductase complex to the cell membrane, binds quinones. The chain is Fumarate reductase subunit C from Haemophilus ducreyi (strain 35000HP / ATCC 700724).